The chain runs to 452 residues: PTS system N-acetylglucosamine-specific EIICB component (452 aa).

Residues 1–361 (MLSFLQKLGK…LNLKTPGRED (361 aa)) form the PTS EIIC type-1 domain. 9 consecutive transmembrane segments (helical) span residues 8–28 (LGKS…ILAL), 42–62 (AGTA…AIGI), 91–111 (TNNM…YTYN), 130–150 (LVPI…GVVW), 163–183 (WMLG…RLLI), 223–243 (MTGF…AMVV), 257–277 (MIGF…EFAF), 279–299 (FLSP…LFIV), and 329–349 (LLLL…YVLI). The 78-residue stretch at 375 to 452 (DVNENIMLKG…AAEELRAAVK (78 aa)) folds into the PTS EIIB type-1 domain. Cys397 (phosphocysteine intermediate; for EIIB activity) is an active-site residue.

In terms of assembly, interacts with FloT.

The protein resides in the cell membrane. The protein localises to the membrane raft. The enzyme catalyses N(pros)-phospho-L-histidyl-[protein] + N-acetyl-D-glucosamine(out) = N-acetyl-D-glucosamine 6-phosphate(in) + L-histidyl-[protein]. In terms of biological role, the phosphoenolpyruvate-dependent sugar phosphotransferase system (sugar PTS), a major carbohydrate active -transport system, catalyzes the phosphorylation of incoming sugar substrates concomitantly with their translocation across the cell membrane. This system is involved in N-acetylglucosamine transport. In Bacillus subtilis (strain 168), this protein is PTS system N-acetylglucosamine-specific EIICB component (nagP).